A 315-amino-acid polypeptide reads, in one-letter code: Ribosomal RNA small subunit methyltransferase H (315 aa).

Residues 35-37 (GGH), aspartate 55, phenylalanine 80, aspartate 102, and glutamine 109 contribute to the S-adenosyl-L-methionine site.

The protein belongs to the methyltransferase superfamily. RsmH family.

It is found in the cytoplasm. It catalyses the reaction cytidine(1402) in 16S rRNA + S-adenosyl-L-methionine = N(4)-methylcytidine(1402) in 16S rRNA + S-adenosyl-L-homocysteine + H(+). Functionally, specifically methylates the N4 position of cytidine in position 1402 (C1402) of 16S rRNA. This chain is Ribosomal RNA small subunit methyltransferase H, found in Shewanella pealeana (strain ATCC 700345 / ANG-SQ1).